We begin with the raw amino-acid sequence, 779 residues long: Phosphoribosylformylglycinamidine synthase subunit PurL (779 aa).

H52 is a catalytic residue. ATP contacts are provided by Y55 and K94. Residue E96 coordinates Mg(2+). Substrate-binding positions include 97 to 100 and R119; that span reads SHNH. H98 acts as the Proton acceptor in catalysis. Residue D120 coordinates Mg(2+). Q243 lines the substrate pocket. Position 271 (D271) interacts with Mg(2+). 315 to 317 contacts substrate; the sequence is ESQ. The ATP site is built by N523 and G560. A Mg(2+)-binding site is contributed by N561. S563 provides a ligand contact to substrate.

It belongs to the FGAMS family. As to quaternary structure, monomer. Part of the FGAM synthase complex composed of 1 PurL, 1 PurQ and 2 PurS subunits.

It is found in the cytoplasm. It catalyses the reaction N(2)-formyl-N(1)-(5-phospho-beta-D-ribosyl)glycinamide + L-glutamine + ATP + H2O = 2-formamido-N(1)-(5-O-phospho-beta-D-ribosyl)acetamidine + L-glutamate + ADP + phosphate + H(+). It participates in purine metabolism; IMP biosynthesis via de novo pathway; 5-amino-1-(5-phospho-D-ribosyl)imidazole from N(2)-formyl-N(1)-(5-phospho-D-ribosyl)glycinamide: step 1/2. Its function is as follows. Part of the phosphoribosylformylglycinamidine synthase complex involved in the purines biosynthetic pathway. Catalyzes the ATP-dependent conversion of formylglycinamide ribonucleotide (FGAR) and glutamine to yield formylglycinamidine ribonucleotide (FGAM) and glutamate. The FGAM synthase complex is composed of three subunits. PurQ produces an ammonia molecule by converting glutamine to glutamate. PurL transfers the ammonia molecule to FGAR to form FGAM in an ATP-dependent manner. PurS interacts with PurQ and PurL and is thought to assist in the transfer of the ammonia molecule from PurQ to PurL. This is Phosphoribosylformylglycinamidine synthase subunit PurL from Prochlorococcus marinus subsp. pastoris (strain CCMP1986 / NIES-2087 / MED4).